The primary structure comprises 223 residues: Translation initiation factor 6 (223 aa).

The protein belongs to the eIF-6 family.

Binds to the 50S ribosomal subunit and prevents its association with the 30S ribosomal subunit to form the 70S initiation complex. The polypeptide is Translation initiation factor 6 (Sulfurisphaera tokodaii (strain DSM 16993 / JCM 10545 / NBRC 100140 / 7) (Sulfolobus tokodaii)).